The primary structure comprises 244 residues: Cell division protein DivIB (244 aa).

Over Met-1–Pro-6 the chain is Cytoplasmic. A helical transmembrane segment spans residues Leu-7–Leu-27. One can recognise a POTRA domain in the interval Gln-28–Gly-104. Residues Gln-28 to Gln-244 are Extracellular-facing.

This sequence belongs to the FtsQ/DivIB family. DivIB subfamily.

It localises to the cell membrane. In terms of biological role, cell division protein that may be involved in stabilizing or promoting the assembly of the division complex. This chain is Cell division protein DivIB, found in Leuconostoc kimchii (strain IMSNU 11154 / KCTC 2386 / IH25).